The chain runs to 139 residues: S-adenosylmethionine decarboxylase proenzyme (139 aa).

Ser-63 (schiff-base intermediate with substrate; via pyruvic acid) is an active-site residue. At Ser-63 the chain carries Pyruvic acid (Ser); by autocatalysis. Residue His-68 is the Proton acceptor; for processing activity of the active site. The active-site Proton donor; for catalytic activity is Cys-83.

This sequence belongs to the prokaryotic AdoMetDC family. Type 1 subfamily. Heterotetramer of two alpha and two beta chains arranged as a dimer of alpha/beta heterodimers. Pyruvate is required as a cofactor. Post-translationally, is synthesized initially as an inactive proenzyme. Formation of the active enzyme involves a self-maturation process in which the active site pyruvoyl group is generated from an internal serine residue via an autocatalytic post-translational modification. Two non-identical subunits are generated from the proenzyme in this reaction, and the pyruvate is formed at the N-terminus of the alpha chain, which is derived from the carboxyl end of the proenzyme. The post-translation cleavage follows an unusual pathway, termed non-hydrolytic serinolysis, in which the side chain hydroxyl group of the serine supplies its oxygen atom to form the C-terminus of the beta chain, while the remainder of the serine residue undergoes an oxidative deamination to produce ammonia and the pyruvoyl group blocking the N-terminus of the alpha chain.

It catalyses the reaction S-adenosyl-L-methionine + H(+) = S-adenosyl 3-(methylsulfanyl)propylamine + CO2. The protein operates within amine and polyamine biosynthesis; S-adenosylmethioninamine biosynthesis; S-adenosylmethioninamine from S-adenosyl-L-methionine: step 1/1. Functionally, catalyzes the decarboxylation of S-adenosylmethionine to S-adenosylmethioninamine (dcAdoMet), the propylamine donor required for the synthesis of the polyamines spermine and spermidine from the diamine putrescine. This chain is S-adenosylmethionine decarboxylase proenzyme, found in Pyrococcus furiosus (strain ATCC 43587 / DSM 3638 / JCM 8422 / Vc1).